The primary structure comprises 309 residues: Homoserine kinase (309 aa).

ATP is bound at residue 91–101; the sequence is PLARGLGSSAA.

This sequence belongs to the GHMP kinase family. Homoserine kinase subfamily.

The protein resides in the cytoplasm. It carries out the reaction L-homoserine + ATP = O-phospho-L-homoserine + ADP + H(+). Its pathway is amino-acid biosynthesis; L-threonine biosynthesis; L-threonine from L-aspartate: step 4/5. Its function is as follows. Catalyzes the ATP-dependent phosphorylation of L-homoserine to L-homoserine phosphate. The sequence is that of Homoserine kinase from Bacillus velezensis (strain DSM 23117 / BGSC 10A6 / LMG 26770 / FZB42) (Bacillus amyloliquefaciens subsp. plantarum).